Here is a 234-residue protein sequence, read N- to C-terminus: Large ribosomal subunit protein uL1 (234 aa).

It belongs to the universal ribosomal protein uL1 family. As to quaternary structure, part of the 50S ribosomal subunit.

In terms of biological role, binds directly to 23S rRNA. The L1 stalk is quite mobile in the ribosome, and is involved in E site tRNA release. Its function is as follows. Protein L1 is also a translational repressor protein, it controls the translation of the L11 operon by binding to its mRNA. In Helicobacter pylori (strain G27), this protein is Large ribosomal subunit protein uL1.